The primary structure comprises 482 residues: tRNA sulfurtransferase (482 aa).

Residues 61–165 form the THUMP domain; that stretch reads PAIRDALTRI…NDRLLLVKGR (105 aa). Residues 183-184, lysine 265, glycine 287, and glutamine 296 contribute to the ATP site; that span reads LI. A disulfide bond links cysteine 344 and cysteine 456. One can recognise a Rhodanese domain in the interval 404-482; sequence FGANDAILDI…GFSNVKVYRP (79 aa). Cysteine 456 acts as the Cysteine persulfide intermediate in catalysis.

It belongs to the ThiI family.

It is found in the cytoplasm. It carries out the reaction [ThiI sulfur-carrier protein]-S-sulfanyl-L-cysteine + a uridine in tRNA + 2 reduced [2Fe-2S]-[ferredoxin] + ATP + H(+) = [ThiI sulfur-carrier protein]-L-cysteine + a 4-thiouridine in tRNA + 2 oxidized [2Fe-2S]-[ferredoxin] + AMP + diphosphate. It catalyses the reaction [ThiS sulfur-carrier protein]-C-terminal Gly-Gly-AMP + S-sulfanyl-L-cysteinyl-[cysteine desulfurase] + AH2 = [ThiS sulfur-carrier protein]-C-terminal-Gly-aminoethanethioate + L-cysteinyl-[cysteine desulfurase] + A + AMP + 2 H(+). It participates in cofactor biosynthesis; thiamine diphosphate biosynthesis. Its function is as follows. Catalyzes the ATP-dependent transfer of a sulfur to tRNA to produce 4-thiouridine in position 8 of tRNAs, which functions as a near-UV photosensor. Also catalyzes the transfer of sulfur to the sulfur carrier protein ThiS, forming ThiS-thiocarboxylate. This is a step in the synthesis of thiazole, in the thiamine biosynthesis pathway. The sulfur is donated as persulfide by IscS. This is tRNA sulfurtransferase from Klebsiella pneumoniae subsp. pneumoniae (strain ATCC 700721 / MGH 78578).